The primary structure comprises 219 residues: Octanoyltransferase (219 aa).

The BPL/LPL catalytic domain maps to 32 to 207; the sequence is ENSQDEIWIV…TLSQELGLDK (176 aa). Substrate-binding positions include 71 to 78, 138 to 140, and 151 to 153; these read RGGQVTYH, SLG, and GLA. The Acyl-thioester intermediate role is filled by Cys169.

The protein belongs to the LipB family.

Its subcellular location is the cytoplasm. It catalyses the reaction octanoyl-[ACP] + L-lysyl-[protein] = N(6)-octanoyl-L-lysyl-[protein] + holo-[ACP] + H(+). The protein operates within protein modification; protein lipoylation via endogenous pathway; protein N(6)-(lipoyl)lysine from octanoyl-[acyl-carrier-protein]: step 1/2. Functionally, catalyzes the transfer of endogenously produced octanoic acid from octanoyl-acyl-carrier-protein onto the lipoyl domains of lipoate-dependent enzymes. Lipoyl-ACP can also act as a substrate although octanoyl-ACP is likely to be the physiological substrate. The polypeptide is Octanoyltransferase (Shewanella pealeana (strain ATCC 700345 / ANG-SQ1)).